A 60-amino-acid polypeptide reads, in one-letter code: Metallothionein B (60 aa).

A beta region spans residues 1–28 (MDPCDCSKSGTCNCGGSCTCTNCSCTTC). Residues Cys4, Cys6, Cys12, Cys14, Cys18, Cys20, Cys23, Cys25, Cys28, Cys32, Cys33, Cys35, Cys36, Cys40, Cys43, Cys47, Cys49, Cys54, Cys58, and Cys59 each contribute to the a divalent metal cation site. Residues 29-60 (KKSCCPCCPSGCTKCASGCVCKGKTCDTSCCQ) form an alpha region.

Belongs to the metallothionein superfamily. Type 1 family.

Functionally, metallothioneins have a high content of cysteine residues that bind various heavy metals. This chain is Metallothionein B (mtb), found in Dicentrarchus labrax (European seabass).